A 180-amino-acid polypeptide reads, in one-letter code: MSTNAIAKRYAKALVQLGSEAGSVDSFNAELTRFSALLTDSRDLSAVFANPAYGIESKREVMKELVAKLQLSPMISNLLMLLLERGRISVLPQISESYGAFADELSGVIRPTLSSGLPLEASQIEEIRSALAKSTGKKVELKVEVDPSLIGGVVTKIGGKVFDGSVRTQLARIQDILQKG.

It belongs to the ATPase delta chain family. In terms of assembly, F-type ATPases have 2 components, F(1) - the catalytic core - and F(0) - the membrane proton channel. F(1) has five subunits: alpha(3), beta(3), gamma(1), delta(1), epsilon(1). F(0) has three main subunits: a(1), b(2) and c(10-14). The alpha and beta chains form an alternating ring which encloses part of the gamma chain. F(1) is attached to F(0) by a central stalk formed by the gamma and epsilon chains, while a peripheral stalk is formed by the delta and b chains.

The protein resides in the cell inner membrane. Functionally, f(1)F(0) ATP synthase produces ATP from ADP in the presence of a proton or sodium gradient. F-type ATPases consist of two structural domains, F(1) containing the extramembraneous catalytic core and F(0) containing the membrane proton channel, linked together by a central stalk and a peripheral stalk. During catalysis, ATP synthesis in the catalytic domain of F(1) is coupled via a rotary mechanism of the central stalk subunits to proton translocation. Its function is as follows. This protein is part of the stalk that links CF(0) to CF(1). It either transmits conformational changes from CF(0) to CF(1) or is implicated in proton conduction. The polypeptide is ATP synthase subunit delta (Citrifermentans bemidjiense (strain ATCC BAA-1014 / DSM 16622 / JCM 12645 / Bem) (Geobacter bemidjiensis)).